Consider the following 446-residue polypeptide: Dimethylsulfoniopropionate lyase DddP (446 aa).

Positions 1-13 (MNQHYSETRKIDP) are enriched in basic and acidic residues. A disordered region spans residues 1 to 30 (MNQHYSETRKIDPSRGATLGDNTPNDNNRI). 6 residues coordinate a divalent metal cation: D295, D297, D307, H371, E406, and E421.

It belongs to the peptidase M24B family. Homodimer. The cofactor is a divalent metal cation.

It carries out the reaction S,S-dimethyl-beta-propiothetin = acrylate + dimethyl sulfide + H(+). Able to cleave dimethylsulfoniopropionate (DMSP), releasing dimethyl sulfide (DMS). DMS is the principal form by which sulfur is transported from oceans to the atmosphere. The real activity of the protein is however subject to debate and it is unclear whether it constitutes a real dimethylsulfoniopropionate lyase in vivo: the low activity with DMSP as substrate suggests that DMSP is not its native substrate. The polypeptide is Dimethylsulfoniopropionate lyase DddP (Roseovarius nubinhibens (strain ATCC BAA-591 / DSM 15170 / ISM)).